Here is a 232-residue protein sequence, read N- to C-terminus: Ribonuclease 3 (232 aa).

Residues 5-134 enclose the RNase III domain; the sequence is QTVLKNHFAI…FLGALLLDKD (130 aa). Residue Glu-47 participates in Mg(2+) binding. Residue Asp-51 is part of the active site. The Mg(2+) site is built by Asp-120 and Glu-123. The active site involves Glu-123. One can recognise a DRBM domain in the interval 160 to 229; sequence DYKTHLQELL…AKNAVEKGLD (70 aa).

This sequence belongs to the ribonuclease III family. As to quaternary structure, homodimer. The cofactor is Mg(2+).

The protein localises to the cytoplasm. The catalysed reaction is Endonucleolytic cleavage to 5'-phosphomonoester.. Digests double-stranded RNA. Involved in the processing of primary rRNA transcript to yield the immediate precursors to the large and small rRNAs (23S and 16S). Processes some mRNAs, and tRNAs when they are encoded in the rRNA operon. Processes pre-crRNA and tracrRNA of type II CRISPR loci if present in the organism. The polypeptide is Ribonuclease 3 (Streptococcus pneumoniae serotype 4 (strain ATCC BAA-334 / TIGR4)).